The primary structure comprises 83 residues: MKASMFLALAGLVLLFVVDYASESEEKEFPIELLSKIFAVDVFKGEERGCKGFDDSCTPGKNECCPNHACSNKHKWCKVYLGK.

The N-terminal stretch at 1 to 21 (MKASMFLALAGLVLLFVVDYA) is a signal peptide. Residues 22 to 48 (SESEEKEFPIELLSKIFAVDVFKGEER) constitute a propeptide that is removed on maturation. 3 disulfide bridges follow: C50–C65, C57–C70, and C64–C77. L81 is subject to Leucine amide.

The protein belongs to the neurotoxin 10 (Hwtx-1) family. 15 (Hntx-3) subfamily. As to quaternary structure, monomer. As to expression, expressed by the venom gland.

The protein resides in the secreted. Its function is as follows. Lethal neurotoxin. Selectively blocks tetrodotoxin-sensitive voltage-gated sodium channels (Nav). Does not affect tetrodotoxin-resistant voltage-gated sodium channels or calcium channels. In Cyriopagopus hainanus (Chinese bird spider), this protein is Mu-theraphotoxin-Hhn2k.